We begin with the raw amino-acid sequence, 855 residues long: Cytosolic phospholipase A2 zeta (855 aa).

The region spanning 27–145 (EKSEPQWKHR…QLGQPCTKNF (119 aa)) is the C2 domain. The Ca(2+) site is built by Asp-60, Asp-66, Asp-116, Asp-118, and Asp-123. One can recognise a PLA2c domain in the interval 304–855 (MSSSGDLDLR…RRQAGGRVGG (552 aa)). The active-site Nucleophile is Ser-393. Asp-685 functions as the Proton acceptor in the catalytic mechanism.

The cofactor is Ca(2+). Strongly expressed in thyroid, expressed at intermediate level in stomach and at very low level in large intestine and prostate.

Its subcellular location is the cytoplasm. The protein resides in the cytosol. The protein localises to the cell membrane. It localises to the mitochondrion. The enzyme catalyses a 1,2-diacyl-sn-glycero-3-phosphocholine + H2O = a 1-acyl-sn-glycero-3-phosphocholine + a fatty acid + H(+). It carries out the reaction a 1-O-alkyl-2-acyl-sn-glycero-3-phosphocholine + H2O = a 1-O-alkyl-sn-glycero-3-phosphocholine + a fatty acid + H(+). The catalysed reaction is 1-hexadecanoyl-2-(9Z-octadecenoyl)-sn-glycero-3-phosphocholine + H2O = 2-(9Z-octadecenoyl)-sn-glycero-3-phosphocholine + hexadecanoate + H(+). It catalyses the reaction 1-hexadecanoyl-2-(9Z,12Z-octadecadienoyl)-sn-glycero-3-phosphocholine + H2O = (9Z,12Z)-octadecadienoate + 1-hexadecanoyl-sn-glycero-3-phosphocholine + H(+). The enzyme catalyses 1-hexadecanoyl-2-(5Z,8Z,11Z,14Z-eicosatetraenoyl)-sn-glycero-3-phosphocholine + H2O = 1-hexadecanoyl-sn-glycero-3-phosphocholine + (5Z,8Z,11Z,14Z)-eicosatetraenoate + H(+). It carries out the reaction 1-hexadecanoyl-2-(9Z,12Z-octadecadienoyl)-sn-glycero-3-phosphoethanolamine + H2O = 1-hexadecanoyl-sn-glycero-3-phosphoethanolamine + (9Z,12Z)-octadecadienoate + H(+). The catalysed reaction is 1-hexadecanoyl-2-(5Z,8Z,11Z,14Z-eicosatetraenoyl)-sn-glycero-3-phosphoethanolamine + H2O = 1-hexadecanoyl-sn-glycero-3-phosphoethanolamine + (5Z,8Z,11Z,14Z)-eicosatetraenoate + H(+). It catalyses the reaction 1-(5Z,8Z,11Z,14Z-eicosatetraenoyl)-2-O-hexadecyl-sn-glycero-3-phosphocholine + H2O = 2-O-hexadecyl-sn-glycero-3-phosphocholine + (5Z,8Z,11Z,14Z)-eicosatetraenoate + H(+). The enzyme catalyses 1-O-hexadecyl-2-(5Z,8Z,11Z,14Z)-eicosatetraenoyl-sn-glycero-3-phosphocholine + H2O = 1-O-hexadecyl-sn-glycero-3-phosphocholine + (5Z,8Z,11Z,14Z)-eicosatetraenoate + H(+). It carries out the reaction 1-hexadecanoyl-sn-glycero-3-phosphocholine + H2O = sn-glycerol 3-phosphocholine + hexadecanoate + H(+). Its activity is regulated as follows. Stimulated by cytosolic Ca(2+). Has calcium-dependent phospholipase and lysophospholipase activities with a potential role in membrane lipid remodeling and biosynthesis of lipid mediators. Preferentially hydrolyzes the ester bond of the fatty acyl group attached at sn-2 position of phospholipids (phospholipase A2 activity). Selectively hydrolyzes sn-2 arachidonoyl group from membrane phospholipids, providing the precursor for eicosanoid biosynthesis. In myocardial mitochondria, plays a major role in arachidonate release that is metabolically channeled to the formation of cardioprotective eicosanoids, epoxyeicosatrienoates (EETs). The sequence is that of Cytosolic phospholipase A2 zeta (Pla2g4f) from Mus musculus (Mouse).